We begin with the raw amino-acid sequence, 47 residues long: Putative protein PinH (47 aa).

A Resolvase/invertase-type recombinase catalytic domain is found at 1 to 47 (MWHLVVLLEELCERGINFRALAQSIFAQQWGDECCKSKTICDLKVIV).

Belongs to the site-specific recombinase resolvase family.

This is Putative protein PinH (pinH) from Escherichia coli (strain K12).